A 145-amino-acid polypeptide reads, in one-letter code: Protein FAM216B (145 aa).

The interval 92-121 (TKRASAKAGPHRTVPQRAAGRTRTQPSARP) is disordered.

It belongs to the FAM216 family.

The protein is Protein FAM216B (FAM216B) of Bos taurus (Bovine).